The following is a 275-amino-acid chain: NH(3)-dependent NAD(+) synthetase (275 aa).

Position 47–54 (47–54 (GISGGQDS)) interacts with ATP. Residue aspartate 53 coordinates Mg(2+). Arginine 141 lines the deamido-NAD(+) pocket. Residue threonine 161 participates in ATP binding. Glutamate 166 lines the Mg(2+) pocket. Residues lysine 174 and aspartate 181 each coordinate deamido-NAD(+). ATP-binding residues include lysine 190 and threonine 212. Residue 261–262 (HK) coordinates deamido-NAD(+).

This sequence belongs to the NAD synthetase family. As to quaternary structure, homodimer.

It carries out the reaction deamido-NAD(+) + NH4(+) + ATP = AMP + diphosphate + NAD(+) + H(+). The protein operates within cofactor biosynthesis; NAD(+) biosynthesis; NAD(+) from deamido-NAD(+) (ammonia route): step 1/1. Functionally, catalyzes the ATP-dependent amidation of deamido-NAD to form NAD. Uses ammonia as a nitrogen source. This chain is NH(3)-dependent NAD(+) synthetase, found in Latilactobacillus sakei subsp. sakei (strain 23K) (Lactobacillus sakei subsp. sakei).